Reading from the N-terminus, the 209-residue chain is 3-demethoxyubiquinol 3-hydroxylase (209 aa).

Fe cation-binding residues include E58, E88, H91, E140, E172, and H175.

The protein belongs to the COQ7 family. Requires Fe cation as cofactor.

It is found in the cell membrane. It catalyses the reaction a 5-methoxy-2-methyl-3-(all-trans-polyprenyl)benzene-1,4-diol + AH2 + O2 = a 3-demethylubiquinol + A + H2O. Its pathway is cofactor biosynthesis; ubiquinone biosynthesis. Functionally, catalyzes the hydroxylation of 2-nonaprenyl-3-methyl-6-methoxy-1,4-benzoquinol during ubiquinone biosynthesis. The chain is 3-demethoxyubiquinol 3-hydroxylase from Polynucleobacter asymbioticus (strain DSM 18221 / CIP 109841 / QLW-P1DMWA-1) (Polynucleobacter necessarius subsp. asymbioticus).